Here is a 185-residue protein sequence, read N- to C-terminus: Putative 3-methyladenine DNA glycosylase (185 aa).

The protein belongs to the DNA glycosylase MPG family.

In Rhizobium meliloti (strain 1021) (Ensifer meliloti), this protein is Putative 3-methyladenine DNA glycosylase.